The primary structure comprises 201 residues: Dephospho-CoA kinase (201 aa).

In terms of domain architecture, DPCK spans 3 to 201 (WIGLTGGIAC…KWLEELKNQN (199 aa)). 11 to 16 (ACGKST) contacts ATP.

Belongs to the CoaE family.

The protein resides in the cytoplasm. The enzyme catalyses 3'-dephospho-CoA + ATP = ADP + CoA + H(+). It functions in the pathway cofactor biosynthesis; coenzyme A biosynthesis; CoA from (R)-pantothenate: step 5/5. Functionally, catalyzes the phosphorylation of the 3'-hydroxyl group of dephosphocoenzyme A to form coenzyme A. The protein is Dephospho-CoA kinase of Bdellovibrio bacteriovorus (strain ATCC 15356 / DSM 50701 / NCIMB 9529 / HD100).